A 370-amino-acid chain; its full sequence is Capsular polysaccharide phosphotransferase (370 aa).

Belongs to the stealth family.

Its function is as follows. Part of a capsular polysaccharide synthesis locus. In Actinobacillus suis, this protein is Capsular polysaccharide phosphotransferase.